Here is a 782-residue protein sequence, read N- to C-terminus: Zinc finger and SCAN domain-containing protein 10 (782 aa).

Residues 1-37 are disordered; the sequence is MLAEPVPDALEQEHPGAVKLEEDEVGEEDPRLAESRP. The SCAN box domain maps to 1 to 71; it reads MLAEPVPDAL…GRLRELCNHW (71 aa). Basic and acidic residues-rich tracts occupy residues 11–20 and 28–37; these read EQEHPGAVKL and EDPRLAESRP. Ser160 and Ser206 each carry phosphoserine. Disordered regions lie at residues 197 to 233 and 290 to 321; these read LAPS…ENSR and SQTE…TPAD. 14 C2H2-type zinc fingers span residues 292-315, 321-343, 349-371, 377-399, 421-443, 467-489, 495-517, 523-545, 551-573, 579-601, 607-629, 635-657, 669-691, and 697-719; these read TEKP…STGW, DGSE…EMQF, GVNF…NLQP, SFRC…HMRT, LTKH…NQGF, EGKT…TFKR, RHLR…SLSS, PYVC…HTRR, RPFS…SHQQ, KPHA…RHLL, RPYH…RHVR, KPCR…RHQR, ICGH…TGER, and TCGR…TGSK. A compositionally biased stretch (polar residues) spans 302 to 313; sequence LTQTVGQETSST. Gln485 bears the N5-methylglutamine mark. The interval 491–522 is disordered; the sequence is SSLKRHLRNHAKDKDHLSSEDPGSLSSSQESN. The span at 500 to 509 shows a compositional bias: basic and acidic residues; the sequence is HAKDKDHLSS. Low complexity predominate over residues 510-521; the sequence is EDPGSLSSSQES.

As to quaternary structure, interacts with POU5F1/OCT4 and SOX2. Post-translationally, methylated at Gln-485 by N6AMT1. As to expression, embryonic stem (ES) cell-specific. Not expressed in adult, except in testis.

It is found in the nucleus. In terms of biological role, embryonic stem (ES) cell-specific transcription factor required to maintain ES cell pluripotency. Can both activate and /or repress expression of target genes, depending on the context. Specifically binds the 5'-[GA]CGCNNGCG[CT]-3' DNA consensus sequence. Regulates expression of POU5F1/OCT4, ZSCAN4 and ALYREF/THOC4. This is Zinc finger and SCAN domain-containing protein 10 (Zscan10) from Mus musculus (Mouse).